The chain runs to 78 residues: Alpha-neurotoxin homolog 1 (78 aa).

The N-terminal stretch at 1-21 (MKTLLLTLVVVTIVCLDFGYT) is a signal peptide. Intrachain disulfides connect cysteine 24/cysteine 42, cysteine 37/cysteine 57, cysteine 59/cysteine 70, and cysteine 71/cysteine 76.

The protein belongs to the three-finger toxin family. Short-chain subfamily. Orphan group XII sub-subfamily. Expressed by the venom gland.

Its subcellular location is the secreted. This chain is Alpha-neurotoxin homolog 1, found in Micrurus corallinus (Brazilian coral snake).